The chain runs to 470 residues: Poly(A) polymerase catalytic subunit (470 aa).

Catalysis depends on residues aspartate 192 and aspartate 194.

It belongs to the poxviridae poly(A) polymerase catalytic subunit family. As to quaternary structure, heterodimer of a large (catalytic) subunit and a small (regulatory) subunit.

It carries out the reaction RNA(n) + ATP = RNA(n)-3'-adenine ribonucleotide + diphosphate. In terms of biological role, polymerase that creates the 3'-poly(A) tail of mRNA's. The sequence is that of Poly(A) polymerase catalytic subunit (PAPL) from Deerpox virus (strain Mule deer/United States/W-848-83/1983) (DPV).